Here is a 334-residue protein sequence, read N- to C-terminus: GTP 3',8-cyclase (334 aa).

The Radical SAM core domain maps to 11–236 (GFNRKIDYLR…ESTESSQGPA (226 aa)). Residue arginine 20 coordinates GTP. Cysteine 27 and cysteine 31 together coordinate [4Fe-4S] cluster. Position 33 (tyrosine 33) interacts with S-adenosyl-L-methionine. Residue cysteine 34 coordinates [4Fe-4S] cluster. Residue arginine 69 participates in GTP binding. An S-adenosyl-L-methionine-binding site is contributed by glycine 73. Threonine 100 is a GTP binding site. Residue serine 124 participates in S-adenosyl-L-methionine binding. Lysine 161 lines the GTP pocket. Methionine 195 provides a ligand contact to S-adenosyl-L-methionine. Positions 260 and 263 each coordinate [4Fe-4S] cluster. 265–267 (RVR) contributes to the GTP binding site. Cysteine 277 lines the [4Fe-4S] cluster pocket.

The protein belongs to the radical SAM superfamily. MoaA family. Monomer and homodimer. [4Fe-4S] cluster is required as a cofactor.

It carries out the reaction GTP + AH2 + S-adenosyl-L-methionine = (8S)-3',8-cyclo-7,8-dihydroguanosine 5'-triphosphate + 5'-deoxyadenosine + L-methionine + A + H(+). Its pathway is cofactor biosynthesis; molybdopterin biosynthesis. Catalyzes the cyclization of GTP to (8S)-3',8-cyclo-7,8-dihydroguanosine 5'-triphosphate. This Pseudomonas putida (strain W619) protein is GTP 3',8-cyclase.